Consider the following 505-residue polypeptide: MAAPPAIPRRGLFIGGGWREPTLGRHIPVINPATEDTIGDIPAATAEDVELAVAAGGPVLARRREPWARASGATRAKYLNAIAAKITGKIAYLALLETVDSGKPKDEAVADMDDVAACFEYYAALAEALDGKQHAPISLPMEEFKTYVLKEPIGVVGLITPWNYPLLMATWKVAPALAAGCTAVLKPSELASLTCLELGAICEEIGLPSGVLNIITGLGPDAGAPIASHPHVDKIAFTGSTATGKTIMTAAAQMVKPVSLELGGKSPLVTFDDVADIDKAVEWPMLGCFFNGGQVCSATSRLLLHEKIAEPFLDRLVEWAKNIKISDPLEEGCRLGSVISKGQYEQIKKFISTARSEGATILHGGDRPKHLGKGFFIEPTINTGVSTSMQIWREEVFGPVICVKVFKTESEAVELANDTHYGLAGGVISDDLERCERIAKVIHSGIVWKNCSQPTLVQAPWGGNKRSGFGRELGEWGLENYLSVKQVTRYCKDELYGWYQRPSKL.

An NAD(+)-binding site is contributed by 239–244; that stretch reads GSTATG. The active-site Proton acceptor is Glu261. Cys296 functions as the Nucleophile in the catalytic mechanism. The short motif at 503–505 is the Microbody targeting signal element; it reads SKL.

This sequence belongs to the aldehyde dehydrogenase family. In terms of assembly, homodimer.

It localises to the peroxisome. The catalysed reaction is betaine aldehyde + NAD(+) + H2O = glycine betaine + NADH + 2 H(+). It participates in amine and polyamine biosynthesis; betaine biosynthesis via choline pathway; betaine from betaine aldehyde: step 1/1. The protein is Betaine aldehyde dehydrogenase of Hordeum vulgare (Barley).